Consider the following 232-residue polypeptide: LexA repressor (232 aa).

Residues 1–25 form a disordered region; the sequence is MSDDSSDSTSGAGSGRGRDSGLTER. Residues 16–25 are compositionally biased toward basic and acidic residues; the sequence is RGRDSGLTER. Residues 46–66 constitute a DNA-binding region (H-T-H motif); the sequence is IREIGDAVGLTSTSSVAHQLR. Residues serine 156 and lysine 193 each act as for autocatalytic cleavage activity in the active site.

This sequence belongs to the peptidase S24 family. In terms of assembly, homodimer.

The catalysed reaction is Hydrolysis of Ala-|-Gly bond in repressor LexA.. Represses a number of genes involved in the response to DNA damage (SOS response), including recA and lexA. In the presence of single-stranded DNA, RecA interacts with LexA causing an autocatalytic cleavage which disrupts the DNA-binding part of LexA, leading to derepression of the SOS regulon and eventually DNA repair. The protein is LexA repressor of Mycolicibacterium vanbaalenii (strain DSM 7251 / JCM 13017 / BCRC 16820 / KCTC 9966 / NRRL B-24157 / PYR-1) (Mycobacterium vanbaalenii).